A 341-amino-acid polypeptide reads, in one-letter code: Phosphoribosylformylglycinamidine cyclo-ligase (341 aa).

This sequence belongs to the AIR synthase family.

It localises to the cytoplasm. It catalyses the reaction 2-formamido-N(1)-(5-O-phospho-beta-D-ribosyl)acetamidine + ATP = 5-amino-1-(5-phospho-beta-D-ribosyl)imidazole + ADP + phosphate + H(+). It functions in the pathway purine metabolism; IMP biosynthesis via de novo pathway; 5-amino-1-(5-phospho-D-ribosyl)imidazole from N(2)-formyl-N(1)-(5-phospho-D-ribosyl)glycinamide: step 2/2. The polypeptide is Phosphoribosylformylglycinamidine cyclo-ligase (Lachnoclostridium phytofermentans (strain ATCC 700394 / DSM 18823 / ISDg) (Clostridium phytofermentans)).